Reading from the N-terminus, the 401-residue chain is 2-amino-3-carboxymuconate-6-semialdehyde decarboxylase (401 aa).

Positions 18 and 20 each coordinate Zn(2+). Arg59 is a substrate binding site. Residues His234 and Asp352 each contribute to the Zn(2+) site.

Belongs to the metallo-dependent hydrolases superfamily. ACMSD family. In terms of assembly, monomer.

It catalyses the reaction 2-amino-3-carboxymuconate 6-semialdehyde + H(+) = 2-aminomuconate 6-semialdehyde + CO2. It participates in secondary metabolite metabolism; quinolate metabolism. In terms of biological role, converts alpha-amino-beta-carboxymuconate-epsilon-semialdehyde (ACMS) to alpha-aminomuconate semialdehyde (AMS). This Caenorhabditis elegans protein is 2-amino-3-carboxymuconate-6-semialdehyde decarboxylase.